Consider the following 81-residue polypeptide: Consomatin Le1 (81 aa).

An N-terminal signal peptide occupies residues 1 to 22; it reads MQTAYWVMVMMMVWITAPLSEG. The propeptide occupies 23–57; the sequence is GKPNDVIRGLVPDDLTPQLILRSLISRRRSDKDVR. Residue glutamate 58 is modified to 4-carboxyglutamate. The cysteines at positions 62 and 67 are disulfide-linked. Tryptophan 64 bears the D-tryptophan mark. Proline 69 is subject to 4-hydroxyproline. Residues 71-81 constitute a propeptide that is removed on maturation; that stretch reads LWRRHDLKGKD.

Belongs to the conotoxin C superfamily. Consomatin family. Expressed by the venom duct.

It localises to the secreted. Moderately activates human somatostatin receptors (SSTR) with a preferential activation of SSTR1 and SSTR4. In vivo, does not cause behavioral changes in mice within a few minutes of intracranial injection, but causes a progressive loss of movement thereafter. Four to five hours after injection, mice recover, even with the highest dose tested. Shows antinociception and antihyperalgesia activities in two mouse models of acute pain, most probably by acting outside the central nervous system. This is Consomatin Le1 from Conus lenavati (Cone snail).